Here is a 441-residue protein sequence, read N- to C-terminus: Methylenetetrahydrofolate--tRNA-(uracil-5-)-methyltransferase TrmFO (441 aa).

11 to 16 (GGGLAG) is a binding site for FAD.

It belongs to the MnmG family. TrmFO subfamily. Requires FAD as cofactor.

It localises to the cytoplasm. The enzyme catalyses uridine(54) in tRNA + (6R)-5,10-methylene-5,6,7,8-tetrahydrofolate + NADH + H(+) = 5-methyluridine(54) in tRNA + (6S)-5,6,7,8-tetrahydrofolate + NAD(+). It carries out the reaction uridine(54) in tRNA + (6R)-5,10-methylene-5,6,7,8-tetrahydrofolate + NADPH + H(+) = 5-methyluridine(54) in tRNA + (6S)-5,6,7,8-tetrahydrofolate + NADP(+). Catalyzes the folate-dependent formation of 5-methyl-uridine at position 54 (M-5-U54) in all tRNAs. In Syntrophus aciditrophicus (strain SB), this protein is Methylenetetrahydrofolate--tRNA-(uracil-5-)-methyltransferase TrmFO.